The sequence spans 175 residues: Probable DNA-directed RNA polymerase subunit delta (175 aa).

The HTH HARE-type domain occupies Cys-14 to Trp-81. Residues Ile-91–Leu-175 are disordered. Acidic residues predominate over residues Asp-106–Leu-175.

The protein belongs to the RpoE family. In terms of assembly, RNAP is composed of a core of 2 alpha, a beta and a beta' subunits. The core is associated with a delta subunit and one of several sigma factors.

Its function is as follows. Participates in both the initiation and recycling phases of transcription. In the presence of the delta subunit, RNAP displays an increased specificity of transcription, a decreased affinity for nucleic acids, and an increased efficiency of RNA synthesis because of enhanced recycling. This chain is Probable DNA-directed RNA polymerase subunit delta, found in Bacillus anthracis.